Consider the following 231-residue polypeptide: Staphylococcal superantigen-like 7 (231 aa).

The signal sequence occupies residues 1–30 (MKLKTLAKATLALGLLTTGVITSEGQAVQA).

Belongs to the staphylococcal/streptococcal toxin family. Interacts with host IgA and complement C5; these interactions inhibits complement activation.

It localises to the secreted. Plays a role in the inhibition of host complement-mediated lysis and serum bactericidal activity by interacting with complement component C5. Affects all three pathways of complement activation and inhibits the cleavage of C5 by preventing its binding to C5 convertases. In turn, prevents C5a-mediated neutrophil migration. In Staphylococcus aureus (strain NCTC 8325 / PS 47), this protein is Staphylococcal superantigen-like 7.